A 356-amino-acid chain; its full sequence is A-type ATP synthase subunit C (356 aa).

Belongs to the V-ATPase V0D/AC39 subunit family. As to quaternary structure, has multiple subunits with at least A(3), B(3), C, D, E, F, H, I and proteolipid K(x).

Its subcellular location is the cell membrane. Component of the A-type ATP synthase that produces ATP from ADP in the presence of a proton gradient across the membrane. This is A-type ATP synthase subunit C from Thermoplasma volcanium (strain ATCC 51530 / DSM 4299 / JCM 9571 / NBRC 15438 / GSS1).